A 268-amino-acid polypeptide reads, in one-letter code: Undecaprenyl-diphosphatase (268 aa).

The next 7 membrane-spanning stretches (helical) occupy residues 5-25 (SIIS…IPVS), 43-63 (GNTF…LVYF), 84-104 (FSVL…HGFI), 106-126 (AVLF…GVIL), 184-204 (AAEF…TLDL), 213-233 (FDDI…GIVV), and 248-268 (PFAI…WLVG).

The protein belongs to the UppP family.

It localises to the cell inner membrane. The enzyme catalyses di-trans,octa-cis-undecaprenyl diphosphate + H2O = di-trans,octa-cis-undecaprenyl phosphate + phosphate + H(+). Catalyzes the dephosphorylation of undecaprenyl diphosphate (UPP). Confers resistance to bacitracin. This chain is Undecaprenyl-diphosphatase, found in Sinorhizobium fredii (strain NBRC 101917 / NGR234).